The following is a 434-amino-acid chain: Histidinol dehydrogenase (434 aa).

3 residues coordinate NAD(+): tyrosine 130, glutamine 188, and asparagine 211. Residues serine 237, glutamine 259, and histidine 262 each contribute to the substrate site. Residues glutamine 259 and histidine 262 each coordinate Zn(2+). Catalysis depends on proton acceptor residues glutamate 326 and histidine 327. 4 residues coordinate substrate: histidine 327, aspartate 360, glutamate 414, and histidine 419. Aspartate 360 contributes to the Zn(2+) binding site. Histidine 419 is a Zn(2+) binding site.

It belongs to the histidinol dehydrogenase family. In terms of assembly, homodimer. The cofactor is Zn(2+).

The catalysed reaction is L-histidinol + 2 NAD(+) + H2O = L-histidine + 2 NADH + 3 H(+). Its pathway is amino-acid biosynthesis; L-histidine biosynthesis; L-histidine from 5-phospho-alpha-D-ribose 1-diphosphate: step 9/9. Catalyzes the sequential NAD-dependent oxidations of L-histidinol to L-histidinaldehyde and then to L-histidine. This Shigella dysenteriae serotype 1 (strain Sd197) protein is Histidinol dehydrogenase.